Reading from the N-terminus, the 335-residue chain is tRNA N6-adenosine threonylcarbamoyltransferase (335 aa).

Positions 110 and 114 each coordinate Fe cation. Substrate is bound by residues 132–136 (LVSGG), D165, G178, and N271. D299 serves as a coordination point for Fe cation.

This sequence belongs to the KAE1 / TsaD family. Requires Fe(2+) as cofactor.

The protein localises to the cytoplasm. The enzyme catalyses L-threonylcarbamoyladenylate + adenosine(37) in tRNA = N(6)-L-threonylcarbamoyladenosine(37) in tRNA + AMP + H(+). Its function is as follows. Required for the formation of a threonylcarbamoyl group on adenosine at position 37 (t(6)A37) in tRNAs that read codons beginning with adenine. Is involved in the transfer of the threonylcarbamoyl moiety of threonylcarbamoyl-AMP (TC-AMP) to the N6 group of A37, together with TsaE and TsaB. TsaD likely plays a direct catalytic role in this reaction. This chain is tRNA N6-adenosine threonylcarbamoyltransferase, found in Campylobacter jejuni subsp. jejuni serotype O:23/36 (strain 81-176).